A 172-amino-acid polypeptide reads, in one-letter code: CD164 sialomucin-like 2 protein (172 aa).

The N-terminal stretch at 1-29 (MAAPGPRALRAALCGGCCCLLLCAQLVLA) is a signal peptide. Topologically, residues 30–137 (GKGARGFGRG…PEDHSPGFDG (108 aa)) are extracellular. Asn-69 and Asn-101 each carry an N-linked (GlcNAc...) asparagine glycan. A disordered region spans residues 108–132 (ASHHHSTEEPKPSTTGSPPIPEDHS). The chain crosses the membrane as a helical span at residues 138–158 (ASFIGGIVLVLSLQATAFFVL). Residues 159-172 (RFLKAKDSTYQTLI) lie on the Cytoplasmic side of the membrane.

Belongs to the CD164 family.

Its subcellular location is the membrane. The protein is CD164 sialomucin-like 2 protein (Cd164l2) of Mus musculus (Mouse).